A 445-amino-acid polypeptide reads, in one-letter code: ATP synthase subunit b-delta (445 aa).

Residues 1–168 (MSIFIGQLIG…PSSAVLEAGA (168 aa)) are ATP synthase subunit b. Residues 3-23 (IFIGQLIGFAVIVFILVKWVV) traverse the membrane as a helical segment. Positions 169-445 (SLNLRAASRE…LAAARTGLPD (277 aa)) are ATP synthase subunit delta.

In the N-terminal section; belongs to the ATPase B chain family. It in the C-terminal section; belongs to the ATPase delta chain family. F-type ATPases have 2 components, F(1) - the catalytic core - and F(0) - the membrane proton channel. F(1) has five subunits: alpha(3), beta(3), gamma(1), delta(1), epsilon(1). F(0) has three main subunits: a(1), b(2) and c(10-14). The alpha and beta chains form an alternating ring which encloses part of the gamma chain. F(1) is attached to F(0) by a central stalk formed by the gamma and epsilon chains, while a peripheral stalk is formed by the delta and b chains.

The protein localises to the cell membrane. Functionally, f(1)F(0) ATP synthase produces ATP from ADP in the presence of a proton or sodium gradient. F-type ATPases consist of two structural domains, F(1) containing the extramembraneous catalytic core and F(0) containing the membrane proton channel, linked together by a central stalk and a peripheral stalk. During catalysis, ATP synthesis in the catalytic domain of F(1) is coupled via a rotary mechanism of the central stalk subunits to proton translocation. Its function is as follows. This fusion protein includes a component of the F(0) channel (subunit b) and of the F(1) subunit (subunit delta). Two copies of subunit b and one of delta together form the peripheral 'stator' stalk which links F(1) to F(0). This Mycolicibacterium vanbaalenii (strain DSM 7251 / JCM 13017 / BCRC 16820 / KCTC 9966 / NRRL B-24157 / PYR-1) (Mycobacterium vanbaalenii) protein is ATP synthase subunit b-delta (atpFH).